The primary structure comprises 1040 residues: Contactin-2 (1040 aa).

A signal peptide spans 1–30 (MGAPARKRASLLLLLLATMALVSSPGWSFS). 6 Ig-like C2-type domains span residues 39–130 (PVFE…AVLR), 135–224 (QEFS…SVFS), 241–324 (PSIK…GRII), 329–413 (PEWL…AELA), 419–506 (PDFR…GILS), and 511–605 (TKIT…ATVL). 4 cysteine pairs are disulfide-bonded: C63–C113, C157–C209, C263–C308, and C350–C397. N-linked (GlcNAc...) asparagine glycosylation is found at N78, N200, and N206. N463, N479, N500, and N527 each carry an N-linked (GlcNAc...) asparagine glycan. Fibronectin type-III domains lie at 612-710 (PPGG…TKEA), 715-812 (APSG…SAEE), 817-913 (APAK…MKPP), and 917-1008 (PPGN…NGGT). N777 carries N-linked (GlcNAc...) asparagine glycosylation. The short motif at 796–798 (RGD) is the Cell attachment site element. N832, N920, and N942 each carry an N-linked (GlcNAc...) asparagine glycan. The interval 897-922 (GTGPASPSADAMTMKPPPRRPPGNIS) is disordered. A lipid anchor (GPI-anchor amidated serine) is attached at S1014. Residues 1015 to 1040 (SAVRPAHPGPVFSCMVILMLAGCQRL) constitute a propeptide, removed in mature form.

The protein belongs to the immunoglobulin superfamily. Contactin family.

Its subcellular location is the cell membrane. In terms of biological role, in conjunction with another transmembrane protein, CNTNAP2, contributes to the organization of axonal domains at nodes of Ranvier by maintaining voltage-gated potassium channels at the juxtaparanodal region. This is Contactin-2 (Cntn2) from Mus musculus (Mouse).